A 544-amino-acid polypeptide reads, in one-letter code: Neurofilament light polypeptide (544 aa).

Residue Ser2 is modified to N-acetylserine. The interval 2–87 (SSYSYDPYYT…KIVRTQEKVQ (86 aa)) is head. An IF rod domain is found at 84–394 (EKVQLQDLND…KLLEGEETRL (311 aa)). A coil 1A region spans residues 88–119 (LQDLNDRFANFIERVHELEQRNKVLEAELLLL). A linker 1 region spans residues 120–132 (RQKHNEPSRLRDM). The interval 133 to 228 (YEKEVRDVRL…KVHEEELSQL (96 aa)) is coil 1B. The tract at residues 229–246 (QSQVQYAQVSLEVEVAKP) is linker 12. The segment at 247 to 265 (DLSSALRDIRGQYEKLAAK) is coil 2A. The interval 266–274 (NMQSAEEWF) is linker 2. The segment at 275–390 (KSRFTVLTQS…AAYRKLLEGE (116 aa)) is coil 2B. The interval 391-435 (ETRLSFSGVGAITSGYTQSAPVFGRSAYSLQSSSYMTSRAFPTYY) is tail, subdomain A. Residues 391 to 544 (ETRLSFSGVG…EESEKKEKKK (154 aa)) form a tail region. The tail, subdomain B (acidic) stretch occupies residues 436–544 (SSHVQEEQLD…EESEKKEKKK (109 aa)). Residues 450–544 (IESSRAEEAK…EESEKKEKKK (95 aa)) form a disordered region. Positions 451–462 (ESSRAEEAKAEA) are enriched in basic and acidic residues. A compositionally biased stretch (acidic residues) spans 463–525 (PEEEEEEAAE…EAEGDGEEEG (63 aa)). Basic and acidic residues predominate over residues 526 to 544 (ESKGDEAAEEESEKKEKKK).

Belongs to the intermediate filament family. In terms of assembly, forms homodimers (in vitro).

The protein localises to the cell projection. The protein resides in the axon. It localises to the cytoplasm. Its subcellular location is the cytoskeleton. Its function is as follows. Neurofilaments usually contain three intermediate filament proteins: NEFL, NEFM, and NEFH which are involved in the maintenance of neuronal caliber. May additionally cooperate with other neuronal intermediate filament proteins to form neuronal filamentous networks. This chain is Neurofilament light polypeptide (nefl), found in Xenopus laevis (African clawed frog).